Reading from the N-terminus, the 356-residue chain is Tyrosine recombinase XerS (356 aa).

Positions 16–121 constitute a Core-binding (CB) domain; that stretch reads LMPWFVLEYY…ALSCLYKYLT (106 aa). The Tyr recombinase domain occupies 169–354; the sequence is KFLDYVENEY…VNDEQKNALD (186 aa). Active-site residues include Arg210, Lys234, His306, Arg309, and His332. The active-site O-(3'-phospho-DNA)-tyrosine intermediate is the Tyr341.

Belongs to the 'phage' integrase family. XerS subfamily.

The protein resides in the cytoplasm. With respect to regulation, ftsK is required for recombination. In terms of biological role, site-specific tyrosine recombinase, which acts by catalyzing the cutting and rejoining of the recombining DNA molecules. Essential to convert dimers of the bacterial chromosome into monomers to permit their segregation at cell division. The chain is Tyrosine recombinase XerS from Streptococcus thermophilus (strain ATCC BAA-250 / LMG 18311).